The sequence spans 456 residues: Enolase (456 aa).

Residue Gln-164 coordinates (2R)-2-phosphoglycerate. Residue Glu-207 is the Proton donor of the active site. 3 residues coordinate Mg(2+): Asp-244, Glu-287, and Asp-314. (2R)-2-phosphoglycerate contacts are provided by Lys-339, Arg-368, Ser-369, and Lys-390. Lys-339 acts as the Proton acceptor in catalysis.

It belongs to the enolase family. Component of the RNA degradosome, a multiprotein complex involved in RNA processing and mRNA degradation. Mg(2+) serves as cofactor.

The protein localises to the cytoplasm. The protein resides in the secreted. It localises to the cell surface. It catalyses the reaction (2R)-2-phosphoglycerate = phosphoenolpyruvate + H2O. The protein operates within carbohydrate degradation; glycolysis; pyruvate from D-glyceraldehyde 3-phosphate: step 4/5. Catalyzes the reversible conversion of 2-phosphoglycerate (2-PG) into phosphoenolpyruvate (PEP). It is essential for the degradation of carbohydrates via glycolysis. The protein is Enolase of Francisella tularensis subsp. holarctica (strain LVS).